The chain runs to 391 residues: MVDWVVLLLKAVHIYCYLIGLSNFEFDCRTGRVFKSRRCTIYAFMANIFILITIIYNFTAHGDTNLLFQSANKLHEYVIIIMSGLKIVAGLITVLNRWLQRGQMMQLVKDVIRLYMINPQLKSMIRWGILLKAFISFAIELLQVTLSVDALDRQGTAEMMGLLVKLCVSFIMNLAISQHFLVILLIRAQYRIMNAKLRMVIEESRRLSFLQLRNGAFMTRCCYLSDQLEDIGEVQSQLQSMVGQLDEVFGMQGLMAYSEYYLSIVGTSYMSYSIYKYGPHNLKLSAKTSIIVCILITLFYLDALVNCNNMLRVLDHHKDFLGLLEERTVFASSLDIRLEESFESLQLQLARNPLKINVMGMFPITRGSTAAMCASVIVNSIFLIQFDMEFF.

Topologically, residues 1–4 are cytoplasmic; that stretch reads MVDW. The helical transmembrane segment at 5–25 threads the bilayer; that stretch reads VVLLLKAVHIYCYLIGLSNFE. At 26 to 39 the chain is on the extracellular side; the sequence is FDCRTGRVFKSRRC. The chain crosses the membrane as a helical span at residues 40 to 60; sequence TIYAFMANIFILITIIYNFTA. The Cytoplasmic portion of the chain corresponds to 61–74; the sequence is HGDTNLLFQSANKL. The helical transmembrane segment at 75-95 threads the bilayer; it reads HEYVIIIMSGLKIVAGLITVL. Residues 96 to 127 are Extracellular-facing; the sequence is NRWLQRGQMMQLVKDVIRLYMINPQLKSMIRW. The chain crosses the membrane as a helical span at residues 128–148; the sequence is GILLKAFISFAIELLQVTLSV. Over 149 to 165 the chain is Cytoplasmic; that stretch reads DALDRQGTAEMMGLLVK. Residues 166 to 186 traverse the membrane as a helical segment; that stretch reads LCVSFIMNLAISQHFLVILLI. The Extracellular segment spans residues 187-284; sequence RAQYRIMNAK…YKYGPHNLKL (98 aa). Residues 285-305 form a helical membrane-spanning segment; it reads SAKTSIIVCILITLFYLDALV. The Cytoplasmic portion of the chain corresponds to 306 to 363; sequence NCNNMLRVLDHHKDFLGLLEERTVFASSLDIRLEESFESLQLQLARNPLKINVMGMFP. The chain crosses the membrane as a helical span at residues 364–384; that stretch reads ITRGSTAAMCASVIVNSIFLI. Topologically, residues 385 to 391 are extracellular; sequence QFDMEFF.

It belongs to the insect chemoreceptor superfamily. Gustatory receptor (GR) family. Gr22e subfamily. Expressed in neurons of the terminal external chemosensory organ of larvae.

It localises to the cell membrane. Probable gustatory receptor which mediates acceptance or avoidance behavior, depending on its substrates. The chain is Putative gustatory receptor 36b (Gr36b) from Drosophila melanogaster (Fruit fly).